The chain runs to 952 residues: Germ layers disorganized gldi-3 (952 aa).

In terms of domain architecture, FHA spans 39–100 (KSFGRATTND…NGTYINDRRL (62 aa)). Disordered stretches follow at residues 174–220 (IGPR…MPST), 483–639 (GTPK…ESTV), and 652–866 (AAQS…KERC). 2 stretches are compositionally biased toward polar residues: residues 179–195 (PSTT…STNG) and 202–220 (NRAS…MPST). Over residues 523–537 (EESEILDVVGTDEPD) the composition is skewed to acidic residues. A compositionally biased stretch (basic and acidic residues) spans 553–568 (PEDHGRQTQNKIDKNV). 2 stretches are compositionally biased toward polar residues: residues 569-584 (RMSS…TPSA) and 600-620 (VTSS…NPVS). Residues 662 to 679 (SVSNTTSSTSASLTTSSV) are compositionally biased toward low complexity. Residues 685-706 (TSSKENTDQKRAVDDSSDESAR) are compositionally biased toward basic and acidic residues. The span at 715–724 (SATPSSTPAE) shows a compositional bias: low complexity. Residues 725 to 742 (SSKRKQKDTSSRKMKQLD) show a composition bias toward basic and acidic residues. The segment covering 761-772 (TKRRDKARRSTR) has biased composition (basic residues). Acidic residues predominate over residues 789–800 (VEDEDETDDVQE). 2 stretches are compositionally biased toward basic and acidic residues: residues 823–832 (IKERKTKDKD) and 856–866 (PPKTEPSKERC).

The protein resides in the nucleus. Functionally, potential transcription factor that may play a role in the regulation of genes involved in cell cycle G1/S transition. May bind to regulatory elements of genes. This chain is Germ layers disorganized gldi-3, found in Caenorhabditis elegans.